A 414-amino-acid chain; its full sequence is Serine/threonine transporter SstT (414 aa).

The next 8 helical transmembrane spans lie at 16–36 (GSLV…AWIS), 46–66 (LGTL…LMLV), 84–104 (ILFL…VFSF), 143–163 (ALLN…GFAL), 180–200 (AVTF…FGLV), 219–239 (LVVL…LLVF), 300–320 (MAGA…TLGV), and 332–352 (VVAS…LLLI).

The protein belongs to the dicarboxylate/amino acid:cation symporter (DAACS) (TC 2.A.23) family.

The protein localises to the cell inner membrane. The enzyme catalyses L-serine(in) + Na(+)(in) = L-serine(out) + Na(+)(out). The catalysed reaction is L-threonine(in) + Na(+)(in) = L-threonine(out) + Na(+)(out). Involved in the import of serine and threonine into the cell, with the concomitant import of sodium (symport system). This is Serine/threonine transporter SstT from Salmonella agona (strain SL483).